The chain runs to 83 residues: Small ribosomal subunit protein bS20 (83 aa).

A compositionally biased stretch (basic residues) spans 1–11 (MANHKSAAKRA). Positions 1-44 (MANHKSAAKRAKQSEARRLRNKSTRSSMNTAVKKVRTAKEAGTD) are disordered.

It belongs to the bacterial ribosomal protein bS20 family.

Functionally, binds directly to 16S ribosomal RNA. In Desulforapulum autotrophicum (strain ATCC 43914 / DSM 3382 / VKM B-1955 / HRM2) (Desulfobacterium autotrophicum), this protein is Small ribosomal subunit protein bS20.